We begin with the raw amino-acid sequence, 123 residues long: Small ribosomal subunit protein bS6 (123 aa).

The disordered stretch occupies residues 102 to 123 (MLKQKEERAPRREAEAKEFAAE). The span at 104 to 123 (KQKEERAPRREAEAKEFAAE) shows a compositional bias: basic and acidic residues.

This sequence belongs to the bacterial ribosomal protein bS6 family.

Binds together with bS18 to 16S ribosomal RNA. The sequence is that of Small ribosomal subunit protein bS6 from Vibrio vulnificus (strain CMCP6).